A 104-amino-acid chain; its full sequence is Transcription elongation factor A protein-like 9 (104 aa).

Residues 1–48 (MKPCQKMEGNLEKEDEPKPEEEPKPEEKPEEGQEPEEEEKSEETFRER) are disordered. A compositionally biased stretch (basic and acidic residues) spans 9–31 (GNLEKEDEPKPEEEPKPEEKPEE). The span at 32 to 41 (GQEPEEEEKS) shows a compositional bias: acidic residues.

Belongs to the TFS-II family. TFA subfamily.

The protein localises to the nucleus. Its function is as follows. May be involved in transcriptional regulation. The protein is Transcription elongation factor A protein-like 9 (Tceal9) of Mus musculus (Mouse).